The following is a 485-amino-acid chain: Putative aldehyde dehydrogenase AldY (485 aa).

Position 231–236 (231–236) interacts with NAD(+); sequence GSTAVG. Catalysis depends on residues glutamate 253 and cysteine 287.

Belongs to the aldehyde dehydrogenase family.

The enzyme catalyses an aldehyde + NAD(+) + H2O = a carboxylate + NADH + 2 H(+). May contribute to protect cells against stress due to ethanol and related compounds. This chain is Putative aldehyde dehydrogenase AldY (aldY), found in Bacillus subtilis (strain 168).